A 252-amino-acid chain; its full sequence is Aspartate/glutamate leucyltransferase (252 aa).

The protein belongs to the R-transferase family. Bpt subfamily.

It localises to the cytoplasm. The catalysed reaction is N-terminal L-glutamyl-[protein] + L-leucyl-tRNA(Leu) = N-terminal L-leucyl-L-glutamyl-[protein] + tRNA(Leu) + H(+). It catalyses the reaction N-terminal L-aspartyl-[protein] + L-leucyl-tRNA(Leu) = N-terminal L-leucyl-L-aspartyl-[protein] + tRNA(Leu) + H(+). In terms of biological role, functions in the N-end rule pathway of protein degradation where it conjugates Leu from its aminoacyl-tRNA to the N-termini of proteins containing an N-terminal aspartate or glutamate. This chain is Aspartate/glutamate leucyltransferase, found in Xanthomonas campestris pv. campestris (strain B100).